A 291-amino-acid chain; its full sequence is ATP synthase gamma chain (291 aa).

The protein belongs to the ATPase gamma chain family. As to quaternary structure, F-type ATPases have 2 components, CF(1) - the catalytic core - and CF(0) - the membrane proton channel. CF(1) has five subunits: alpha(3), beta(3), gamma(1), delta(1), epsilon(1). CF(0) has three main subunits: a, b and c.

Its subcellular location is the cell inner membrane. Functionally, produces ATP from ADP in the presence of a proton gradient across the membrane. The gamma chain is believed to be important in regulating ATPase activity and the flow of protons through the CF(0) complex. This Chlorobium limicola (strain DSM 245 / NBRC 103803 / 6330) protein is ATP synthase gamma chain.